The following is a 299-amino-acid chain: Bifunctional protein FolD (299 aa).

NADP(+) is bound by residues 169–171 (GRS), serine 194, and isoleucine 235.

Belongs to the tetrahydrofolate dehydrogenase/cyclohydrolase family. In terms of assembly, homodimer.

It carries out the reaction (6R)-5,10-methylene-5,6,7,8-tetrahydrofolate + NADP(+) = (6R)-5,10-methenyltetrahydrofolate + NADPH. It catalyses the reaction (6R)-5,10-methenyltetrahydrofolate + H2O = (6R)-10-formyltetrahydrofolate + H(+). It participates in one-carbon metabolism; tetrahydrofolate interconversion. In terms of biological role, catalyzes the oxidation of 5,10-methylenetetrahydrofolate to 5,10-methenyltetrahydrofolate and then the hydrolysis of 5,10-methenyltetrahydrofolate to 10-formyltetrahydrofolate. The chain is Bifunctional protein FolD from Nostoc sp. (strain PCC 7120 / SAG 25.82 / UTEX 2576).